Consider the following 257-residue polypeptide: NAD-dependent protein deacetylase (257 aa).

Residues 3–252 (NGECLEGGRK…DLVLNEVKGI (250 aa)) form the Deacetylase sirtuin-type domain. NAD(+)-binding residues include Ala-29, Thr-33, Phe-40, Arg-41, Gln-105, Ile-107, Asp-108, and His-123. Residue Phe-40 participates in nicotinamide binding. Nicotinamide is bound by residues Ile-107 and Asp-108. The Proton acceptor role is filled by His-123. The Zn(2+) site is built by Cys-131, Cys-134, Cys-156, and Cys-159. NAD(+) is bound by residues Ser-195, Ser-196, and Asn-220.

The protein belongs to the sirtuin family. Class U subfamily. It depends on Zn(2+) as a cofactor.

The protein resides in the cytoplasm. It catalyses the reaction N(6)-acetyl-L-lysyl-[protein] + NAD(+) + H2O = 2''-O-acetyl-ADP-D-ribose + nicotinamide + L-lysyl-[protein]. Its function is as follows. NAD-dependent protein deacetylase which modulates the activities of several enzymes which are inactive in their acetylated form. Deacetylates the N-terminal lysine residue of Alba, the major archaeal chromatin protein and that, in turn, increases Alba's DNA binding affinity, thereby repressing transcription. The chain is NAD-dependent protein deacetylase from Caldivirga maquilingensis (strain ATCC 700844 / DSM 13496 / JCM 10307 / IC-167).